We begin with the raw amino-acid sequence, 734 residues long: Transcription factor EMB1444 (734 aa).

The segment at 537-566 is disordered; it reads QFPTSLEIPKKNKKRAKPGESSRPRPRDRQ. Residues 548–555 carry the Nuclear localization signal motif; that stretch reads NKKRAKPG. The region spanning 552-601 is the bHLH domain; sequence AKPGESSRPRPRDRQLIQDRIKELRELVPNGSKCSIDSLLECTIKHMLFL. Over residues 553–566 the composition is skewed to basic and acidic residues; sequence KPGESSRPRPRDRQ.

The protein belongs to the bHLH protein family. LHW subfamily. In terms of assembly, homodimer.

It localises to the nucleus. Its function is as follows. Transcription factor that may regulate root development. The protein is Transcription factor EMB1444 of Arabidopsis thaliana (Mouse-ear cress).